A 542-amino-acid chain; its full sequence is Chaperonin GroEL (542 aa).

ATP is bound by residues 29 to 32 (TLGP), 86 to 90 (DGTTT), Gly413, 476 to 478 (NAA), and Asp492. The interval 522-542 (PDENGPAAVPDMGMGGMGGMM) is disordered.

Belongs to the chaperonin (HSP60) family. As to quaternary structure, forms a cylinder of 14 subunits composed of two heptameric rings stacked back-to-back. Interacts with the co-chaperonin GroES.

It localises to the cytoplasm. The enzyme catalyses ATP + H2O + a folded polypeptide = ADP + phosphate + an unfolded polypeptide.. Together with its co-chaperonin GroES, plays an essential role in assisting protein folding. The GroEL-GroES system forms a nano-cage that allows encapsulation of the non-native substrate proteins and provides a physical environment optimized to promote and accelerate protein folding. The polypeptide is Chaperonin GroEL (Listeria monocytogenes serotype 4a (strain HCC23)).